A 164-amino-acid polypeptide reads, in one-letter code: Cytochrome c-type biogenesis protein CcmE (164 aa).

Residues 1 to 7 (MTRKQRR) are Cytoplasmic-facing. A helical; Signal-anchor for type II membrane protein membrane pass occupies residues 8–28 (LLMIGGAGVVLVVAVGLVLNA). Residues 29–164 (MRGSIVFFST…ASADAAGPSR (136 aa)) lie on the Periplasmic side of the membrane. Positions 122 and 126 each coordinate heme. Residues 137–149 (KQGHWKDDYEKKP) are compositionally biased toward basic and acidic residues. The disordered stretch occupies residues 137–164 (KQGHWKDDYEKKPPGAPGASADAAGPSR). Residues 153-164 (PGASADAAGPSR) are compositionally biased toward low complexity.

The protein belongs to the CcmE/CycJ family.

It is found in the cell inner membrane. Heme chaperone required for the biogenesis of c-type cytochromes. Transiently binds heme delivered by CcmC and transfers the heme to apo-cytochromes in a process facilitated by CcmF and CcmH. The polypeptide is Cytochrome c-type biogenesis protein CcmE (Rhodopseudomonas palustris (strain BisB5)).